Reading from the N-terminus, the 690-residue chain is Glycine--tRNA ligase beta subunit (690 aa).

It belongs to the class-II aminoacyl-tRNA synthetase family. As to quaternary structure, tetramer of two alpha and two beta subunits.

The protein resides in the cytoplasm. It catalyses the reaction tRNA(Gly) + glycine + ATP = glycyl-tRNA(Gly) + AMP + diphosphate. The protein is Glycine--tRNA ligase beta subunit of Desulfitobacterium hafniense (strain Y51).